Consider the following 428-residue polypeptide: Sporulation kinase B (428 aa).

At 1–6 (MEILKD) the chain is on the cytoplasmic side. A helical transmembrane segment spans residues 7–27 (YLLHICFILFPILLYQVFWLG). At 28 to 37 (KPAILVPKIN) the chain is on the extracellular side. The helical transmembrane segment at 38-58 (SGLVTLFACGASVLCIIFPIH) threads the bilayer. The Cytoplasmic segment spans residues 59-68 (EMDYIQYGLQ). Residues 69-89 (MIPVIICLFYISTASGLTVAA) form a helical membrane-spanning segment. The Extracellular segment spans residues 90-99 (SVLCFELLFY). Residues 100-120 (EPSAMFVFTLLPFLIIIPILF) form a helical membrane-spanning segment. The Cytoplasmic portion of the chain corresponds to 121 to 132 (QKKWPFMSKAKK). A helical membrane pass occupies residues 133–153 (LLLSLLISCVEIFLFFASSWI). Residues 154 to 166 (LSALNILNFQKSG) are Extracellular-facing. A helical membrane pass occupies residues 167 to 187 (IFVYEAAVSGLFRSSVLLLSI). The Cytoplasmic portion of the chain corresponds to 188–428 (YIIESIAENI…TIKLPADLPH (241 aa)). The Histidine kinase domain occupies 218–426 (SVAHEVRNPL…TVTIKLPADL (209 aa)). A Phosphohistidine; by autocatalysis modification is found at H221.

It localises to the cell membrane. It catalyses the reaction ATP + protein L-histidine = ADP + protein N-phospho-L-histidine.. In terms of biological role, phosphorylates the sporulation-regulatory proteins spo0A and spo0F. Spo0F is required for the KinB activity. The sequence is that of Sporulation kinase B (kinB) from Bacillus subtilis (strain 168).